The sequence spans 519 residues: Cytochrome P450 4A22 (519 aa).

Residues 1-4 constitute a propeptide that is removed on maturation; sequence MSVS. Heme is bound at residue E321. Position 440 is a phosphoserine (S440). C457 lines the heme pocket.

Belongs to the cytochrome P450 family.

It is found in the endoplasmic reticulum membrane. The protein resides in the microsome membrane. The catalysed reaction is an omega-methyl-long-chain fatty acid + reduced [NADPH--hemoprotein reductase] + O2 = an omega-hydroxy-long-chain fatty acid + oxidized [NADPH--hemoprotein reductase] + H2O + H(+). Functionally, catalyzes the omega- and (omega-1)-hydroxylation of various fatty acids such as laurate and palmitate. Shows no activity towards arachidonic acid and prostaglandin A1. Lacks functional activity in the kidney and does not contribute to renal 20-hydroxyeicosatetraenoic acid (20-HETE) biosynthesis. This is Cytochrome P450 4A22 (CYP4A22) from Homo sapiens (Human).